Here is a 272-residue protein sequence, read N- to C-terminus: Ribosomal RNA small subunit methyltransferase A (272 aa).

The S-adenosyl-L-methionine site is built by Asn27, Leu29, Gly54, Glu75, Asp97, and Asn117.

It belongs to the class I-like SAM-binding methyltransferase superfamily. rRNA adenine N(6)-methyltransferase family. RsmA subfamily.

It is found in the cytoplasm. It catalyses the reaction adenosine(1518)/adenosine(1519) in 16S rRNA + 4 S-adenosyl-L-methionine = N(6)-dimethyladenosine(1518)/N(6)-dimethyladenosine(1519) in 16S rRNA + 4 S-adenosyl-L-homocysteine + 4 H(+). Specifically dimethylates two adjacent adenosines (A1518 and A1519) in the loop of a conserved hairpin near the 3'-end of 16S rRNA in the 30S particle. May play a critical role in biogenesis of 30S subunits. The chain is Ribosomal RNA small subunit methyltransferase A from Malacoplasma penetrans (strain HF-2) (Mycoplasma penetrans).